The chain runs to 333 residues: Na(+)/H(+) exchange regulatory cofactor NHE-RF1 (333 aa).

Residues Leu13 to Gln93 form the PDZ 1 domain. 2 disordered regions span residues Val90–Asp164 and Leu232–Leu333. Basic and acidic residues predominate over residues Gln97–Arg111. The span at Glu112–Glu122 shows a compositional bias: low complexity. Positions Ser124–Pro133 are enriched in basic and acidic residues. A PDZ 2 domain is found at Leu135–Leu215. Basic and acidic residues-rich tracts occupy residues Ser274–Ser289 and Trp323–Leu333.

The protein resides in the endomembrane system. It localises to the cell projection. The protein localises to the filopodium. It is found in the ruffle. Its subcellular location is the microvillus. Scaffold protein that connects plasma membrane proteins with members of the ezrin/moesin/radixin family and thereby helps to link them to the actin cytoskeleton and to regulate their surface expression. Was first known to play a role in the regulation of the activity and subcellular location of SLC9A3. May enhance Wnt signaling. The sequence is that of Na(+)/H(+) exchange regulatory cofactor NHE-RF1 (NHERF1) from Gallus gallus (Chicken).